The chain runs to 226 residues: Ribonuclease 3 (226 aa).

The RNase III domain maps to 2 to 129 (IETISKTIKY…LIGAIYLDGG (128 aa)). Glutamate 42 serves as a coordination point for Mg(2+). The active site involves aspartate 46. Positions 115 and 118 each coordinate Mg(2+). The active site involves glutamate 118. Residues 154–223 (DAKTILQEFI…ASLMLNQIKD (70 aa)) form the DRBM domain.

This sequence belongs to the ribonuclease III family. Homodimer. Requires Mg(2+) as cofactor.

The protein resides in the cytoplasm. It catalyses the reaction Endonucleolytic cleavage to 5'-phosphomonoester.. Digests double-stranded RNA. Involved in the processing of primary rRNA transcript to yield the immediate precursors to the large and small rRNAs (23S and 16S). Processes some mRNAs, and tRNAs when they are encoded in the rRNA operon. Processes pre-crRNA and tracrRNA of type II CRISPR loci if present in the organism. This is Ribonuclease 3 from Ehrlichia canis (strain Jake).